The primary structure comprises 240 residues: ATP-dependent dethiobiotin synthetase BioD (240 aa).

15–20 provides a ligand contact to ATP; that stretch reads EIGKTF. T19 provides a ligand contact to Mg(2+). K40 is a catalytic residue. ATP is bound by residues D57, 118–121, and 178–179; these read EGVG and NR. D57 and E118 together coordinate Mg(2+).

The protein belongs to the dethiobiotin synthetase family. In terms of assembly, homodimer. Mg(2+) is required as a cofactor.

Its subcellular location is the cytoplasm. The enzyme catalyses (7R,8S)-7,8-diammoniononanoate + CO2 + ATP = (4R,5S)-dethiobiotin + ADP + phosphate + 3 H(+). The protein operates within cofactor biosynthesis; biotin biosynthesis; biotin from 7,8-diaminononanoate: step 1/2. Its function is as follows. Catalyzes a mechanistically unusual reaction, the ATP-dependent insertion of CO2 between the N7 and N8 nitrogen atoms of 7,8-diaminopelargonic acid (DAPA, also called 7,8-diammoniononanoate) to form a ureido ring. The chain is ATP-dependent dethiobiotin synthetase BioD from Burkholderia pseudomallei (strain 1106a).